Consider the following 343-residue polypeptide: Olfactory receptor 6K6 (343 aa).

Over 1–53 the chain is Extracellular; it reads MKQYSVGNQHSNYRSLLFPFLCSQMTQLTASGNQTMVTEFLFSMFPHAHRGGL. Asn33 is a glycosylation site (N-linked (GlcNAc...) asparagine). Residues 54–74 form a helical membrane-spanning segment; the sequence is LFFIPLLLIYGFILTGNLIMF. Residues 75–82 lie on the Cytoplasmic side of the membrane; it reads IVIQVGMA. A helical membrane pass occupies residues 83–103; the sequence is LHTPLYFFISVLSFLEICYTT. Residues 104-127 are Extracellular-facing; it reads TTIPKMLSCLISEQKSISVAGCLL. Residues Cys125 and Cys217 are joined by a disulfide bond. A helical transmembrane segment spans residues 128–148; the sequence is QMYFFHSLGITESCVLTAMAI. Residues 149-167 are Cytoplasmic-facing; sequence DRYIAICNPLRYPTIMIPK. The helical transmembrane segment at 168-188 threads the bilayer; the sequence is LCIQLTVGSCFCGFLLVLPEI. Residues 189-224 lie on the Extracellular side of the membrane; sequence AWISTLPFCGSNQIHQIFCDFTPVLSLACTDTFLVV. Residues 225-244 traverse the membrane as a helical segment; sequence IVDAIHAAEIVASFLVIALS. Residues 245–264 lie on the Cytoplasmic side of the membrane; it reads YIRIIIVILGMHSAEGHHKA. Residues 265–285 form a helical membrane-spanning segment; sequence FSTCAAHLAVFLLFFGSVAVM. The Extracellular segment spans residues 286–298; the sequence is YLRFSATYSVFWD. Residues 299-319 traverse the membrane as a helical segment; that stretch reads TAIAVTFVILAPFFNPIIYSL. Topologically, residues 320-343 are cytoplasmic; it reads KNKDMKEAIGRLFHYQKRAGWAGK.

This sequence belongs to the G-protein coupled receptor 1 family.

Its subcellular location is the cell membrane. Functionally, odorant receptor. In Homo sapiens (Human), this protein is Olfactory receptor 6K6 (OR6K6).